Consider the following 408-residue polypeptide: MKMQTKKLFITIVSFLLYAPLFLSSPVPDPESVVEEVHKSINASVAGRRKLGYLSCTTGNPIDDCWRCDPHWEQHRQRLADCAIGFGKNAIGGRDGRIYVVTDSGNDNPVSPKPGTLRHAVVQDEPLWIIFQRDMTIQLKEELIMNSFKTIDGRGASVHISGGPCITIQYVTNIIIHGIHIHDCKQGGNAMVRSSPRHFGWRTISDGDGVSIFGGSHVWVDHCSFSNCEDGLIDAIMGSTAITLSNNHMTHHDKVMLLGHSDTYSRDKNMQVTIAFNHFGEGLVQRMPRCRHGYFHVVNNDYTHWEMYAIGGSANPTINSQGNRFLAPNIRFSKEVTKHEDAPESEWKRWNWRSSGDLLLNGAFFTPSGGAASSSYAKASSLGAKPSSLVGPLTSTSGALNCRKGSRC.

Positions 1-24 (MKMQTKKLFITIVSFLLYAPLFLS) are cleaved as a signal peptide. A glycan (N-linked (GlcNAc...) asparagine) is linked at Asn42. Asp206, Asp230, and Asp234 together coordinate Ca(2+). The active site involves Arg286.

It belongs to the polysaccharide lyase 1 family. The cofactor is Ca(2+). In terms of tissue distribution, expressed in flowers, but not in leaves.

The catalysed reaction is Eliminative cleavage of (1-&gt;4)-alpha-D-galacturonan to give oligosaccharides with 4-deoxy-alpha-D-galact-4-enuronosyl groups at their non-reducing ends.. Its pathway is glycan metabolism; pectin degradation; 2-dehydro-3-deoxy-D-gluconate from pectin: step 2/5. The chain is Probable pectate lyase 18 from Arabidopsis thaliana (Mouse-ear cress).